The following is a 176-amino-acid chain: Ribose 1,5-bisphosphate phosphokinase PhnN (176 aa).

Position 10 to 17 (10 to 17) interacts with ATP; sequence GPSGAGKD.

It belongs to the ribose 1,5-bisphosphokinase family.

It carries out the reaction alpha-D-ribose 1,5-bisphosphate + ATP = 5-phospho-alpha-D-ribose 1-diphosphate + ADP. It functions in the pathway metabolic intermediate biosynthesis; 5-phospho-alpha-D-ribose 1-diphosphate biosynthesis; 5-phospho-alpha-D-ribose 1-diphosphate from D-ribose 5-phosphate (route II): step 3/3. Its function is as follows. Catalyzes the phosphorylation of ribose 1,5-bisphosphate to 5-phospho-D-ribosyl alpha-1-diphosphate (PRPP). The polypeptide is Ribose 1,5-bisphosphate phosphokinase PhnN (Methylobacterium radiotolerans (strain ATCC 27329 / DSM 1819 / JCM 2831 / NBRC 15690 / NCIMB 10815 / 0-1)).